The sequence spans 248 residues: NAD-dependent protein deacylase 2 (248 aa).

Residues 1–248 form the Deacetylase sirtuin-type domain; the sequence is MLQAASALRH…HVMAELISHI (248 aa). NAD(+) is bound by residues 19 to 38 and 102 to 105; these read GAGL…GGLY and QNVD. The active-site Proton acceptor is the His122. Residues Cys130, Cys133, Cys152, and Cys155 each coordinate Zn(2+). NAD(+) contacts are provided by residues 193 to 195, 219 to 221, and Ala237; these read GTT and NPQ.

Belongs to the sirtuin family. Class III subfamily. The cofactor is Zn(2+).

It localises to the cytoplasm. The catalysed reaction is N(6)-acetyl-L-lysyl-[protein] + NAD(+) + H2O = 2''-O-acetyl-ADP-D-ribose + nicotinamide + L-lysyl-[protein]. Its function is as follows. NAD-dependent protein deacetylase which modulates the activities of several proteins which are inactive in their acetylated form. The protein is NAD-dependent protein deacylase 2 (cobB2) of Pseudomonas syringae pv. tomato (strain ATCC BAA-871 / DC3000).